The sequence spans 360 residues: Phospho-N-acetylmuramoyl-pentapeptide-transferase (360 aa).

Transmembrane regions (helical) follow at residues 27 to 47 (ILSV…MIRM), 73 to 93 (TMGG…WGDL), 97 to 117 (FVWI…VDDW), 132 to 152 (WKYL…FFTA), 164 to 184 (FFKS…YFVI), 199 to 219 (GLAI…AYAG), 236 to 256 (AGEL…FLWF), 263 to 283 (VFMG…MAVI), 288 to 308 (IVLF…MLQV), and 337 to 357 (KIIV…LATL).

Belongs to the glycosyltransferase 4 family. MraY subfamily. Mg(2+) is required as a cofactor.

The protein localises to the cell inner membrane. The enzyme catalyses UDP-N-acetyl-alpha-D-muramoyl-L-alanyl-gamma-D-glutamyl-meso-2,6-diaminopimeloyl-D-alanyl-D-alanine + di-trans,octa-cis-undecaprenyl phosphate = di-trans,octa-cis-undecaprenyl diphospho-N-acetyl-alpha-D-muramoyl-L-alanyl-D-glutamyl-meso-2,6-diaminopimeloyl-D-alanyl-D-alanine + UMP. It participates in cell wall biogenesis; peptidoglycan biosynthesis. Its function is as follows. Catalyzes the initial step of the lipid cycle reactions in the biosynthesis of the cell wall peptidoglycan: transfers peptidoglycan precursor phospho-MurNAc-pentapeptide from UDP-MurNAc-pentapeptide onto the lipid carrier undecaprenyl phosphate, yielding undecaprenyl-pyrophosphoryl-MurNAc-pentapeptide, known as lipid I. This is Phospho-N-acetylmuramoyl-pentapeptide-transferase from Alcanivorax borkumensis (strain ATCC 700651 / DSM 11573 / NCIMB 13689 / SK2).